A 551-amino-acid chain; its full sequence is MAFNDLLKQVGGVGRFQRIQVTLVVLPLLLMASHNTLQNFTAAIPPHHCRPPAHANLSKDGGLQAWLPQDTQGRPKSCLRFTSPQERPPFLNGTEANGTGTTEPCTDGWIYDNSTFPSTIVTEWDLVCSHRALRQLGQSLYMAGVLIGAMVFGYLADRLGRRKVLILNYLQTAVSGTCAAFSPNFTVYCTFRLLSGMSLAGIALNCMTLNVEWMPIHTRAYVGTLAGYVYSTGQFLLAGVAYAVPHWRYLQLLVSVPFFAFFVYSWFFIESARWYSTPGRLDLTLKALQKVARINGKQEEGAKLSMEVLRTNLQKELTMSKGQASAMELLRCPALRHLFLCLSLLWFATSFAYYGLVMDLQGFGVSIYLIQVIFGAVDLPAKLVCFLVINSLGRRPAQMASLLLAGICILVNGVIPRDQSIVRTSLAVLGKGCLASSFNCIFLYTGELYPTMIRQTGLGMGSTMARVGSIVSPLVSMTSELYPSLPLFIYGAVPVAASAATALLPETLGQPLPDTVQDLESRRRGKPRRQQQEQQKQMVPLQASVQEKNGL.

The Cytoplasmic portion of the chain corresponds to 1 to 23; that stretch reads MAFNDLLKQVGGVGRFQRIQVTL. A helical transmembrane segment spans residues 24-44; that stretch reads VVLPLLLMASHNTLQNFTAAI. At 45 to 135 the chain is on the extracellular side; that stretch reads PPHHCRPPAH…LVCSHRALRQ (91 aa). 3 N-linked (GlcNAc...) asparagine glycosylation sites follow: asparagine 56, asparagine 92, and asparagine 113. The helical transmembrane segment at 136–156 threads the bilayer; the sequence is LGQSLYMAGVLIGAMVFGYLA. The Cytoplasmic portion of the chain corresponds to 157-164; sequence DRLGRRKV. The helical transmembrane segment at 165–187 threads the bilayer; sequence LILNYLQTAVSGTCAAFSPNFTV. The Extracellular segment spans residues 188 to 195; sequence YCTFRLLS. Residues 196 to 216 form a helical membrane-spanning segment; that stretch reads GMSLAGIALNCMTLNVEWMPI. Residues 217–224 are Cytoplasmic-facing; the sequence is HTRAYVGT. The helical transmembrane segment at 225 to 245 threads the bilayer; the sequence is LAGYVYSTGQFLLAGVAYAVP. At 246 to 248 the chain is on the extracellular side; the sequence is HWR. The helical transmembrane segment at 249-269 threads the bilayer; sequence YLQLLVSVPFFAFFVYSWFFI. Topologically, residues 270–337 are cytoplasmic; the sequence is ESARWYSTPG…ELLRCPALRH (68 aa). The chain crosses the membrane as a helical span at residues 338 to 358; that stretch reads LFLCLSLLWFATSFAYYGLVM. Topologically, residues 359 to 368 are extracellular; sequence DLQGFGVSIY. A helical membrane pass occupies residues 369-389; it reads LIQVIFGAVDLPAKLVCFLVI. Topologically, residues 390–395 are cytoplasmic; that stretch reads NSLGRR. The chain crosses the membrane as a helical span at residues 396-416; sequence PAQMASLLLAGICILVNGVIP. Topologically, residues 417–425 are extracellular; the sequence is RDQSIVRTS. A helical membrane pass occupies residues 426 to 446; the sequence is LAVLGKGCLASSFNCIFLYTG. Residues 447-484 lie on the Cytoplasmic side of the membrane; that stretch reads ELYPTMIRQTGLGMGSTMARVGSIVSPLVSMTSELYPS. The chain crosses the membrane as a helical span at residues 485-505; sequence LPLFIYGAVPVAASAATALLP. The Extracellular portion of the chain corresponds to 506-551; the sequence is ETLGQPLPDTVQDLESRRRGKPRRQQQEQQKQMVPLQASVQEKNGL. Residues 520–551 form a disordered region; sequence ESRRRGKPRRQQQEQQKQMVPLQASVQEKNGL.

This sequence belongs to the major facilitator (TC 2.A.1) superfamily. Organic cation transporter (TC 2.A.1.19) family. Glycosylated. Glycosylation is necessary for proper targeting of the transporter to the plasma membrane.

Its subcellular location is the basolateral cell membrane. The protein resides in the basal cell membrane. It catalyses the reaction (6R)-L-erythro-5,6,7,8-tetrahydrobiopterin(out) + a dicarboxylate(in) = (6R)-L-erythro-5,6,7,8-tetrahydrobiopterin(in) + a dicarboxylate(out). It carries out the reaction L-erythro-7,8-dihydrobiopterin(out) + a dicarboxylate(in) = L-erythro-7,8-dihydrobiopterin(in) + a dicarboxylate(out). The enzyme catalyses L-sepiapterin(out) + a dicarboxylate(in) = L-sepiapterin(in) + a dicarboxylate(out). The catalysed reaction is prostaglandin F2alpha(out) + a dicarboxylate(in) = prostaglandin F2alpha(in) + a dicarboxylate(out). It catalyses the reaction prostaglandin E2(out) + a dicarboxylate(in) = prostaglandin E2(in) + a dicarboxylate(out). It carries out the reaction 3',5'-cyclic AMP(out) + a dicarboxylate(in) = 3',5'-cyclic AMP(in) + a dicarboxylate(out). The enzyme catalyses 3',5'-cyclic GMP(out) + a dicarboxylate(in) = 3',5'-cyclic GMP(in) + a dicarboxylate(out). The catalysed reaction is urate(out) + a dicarboxylate(in) = urate(in) + a dicarboxylate(out). It catalyses the reaction kynurenate(out) + glutarate(in) = kynurenate(in) + glutarate(out). It carries out the reaction (indol-3-yl)acetate(out) + a dicarboxylate(in) = (indol-3-yl)acetate(in) + a dicarboxylate(out). The enzyme catalyses indoxyl sulfate(out) + a dicarboxylate(in) = indoxyl sulfate(in) + a dicarboxylate(out). The catalysed reaction is N-benzoylglycine(out) + a dicarboxylate(in) = N-benzoylglycine(in) + a dicarboxylate(out). It catalyses the reaction 3-carboxy-4-methyl-5-propyl-2-furanpropanoate(out) + a dicarboxylate(in) = 3-carboxy-4-methyl-5-propyl-2-furanpropanoate(in) + a dicarboxylate(out). Secondary active transporter that functions as a Na(+)-independent organic anion (OA)/dicarboxylate antiporter where the uptake of one molecule of OA into the cell is coupled with an efflux of one molecule of intracellular dicarboxylate such as 2-oxoglutarate or glutarate. Mediates the uptake of OA across the basolateral side of proximal tubule epithelial cells, thereby contributing to the renal elimination of endogenous OA from the systemic circulation into the urine. Functions as a biopterin transporters involved in the uptake and the secretion of coenzymes tetrahydrobiopterin (BH4), dihydrobiopterin (BH2) and sepiapterin to urine, thereby determining baseline levels of blood biopterins. Transports prostaglandin E2 (PGE2) and prostaglandin F2-alpha (PGF2-alpha) and may contribute to their renal excretion. Also mediates the uptake of cyclic nucleotides such as cAMP and cGMP. Involved in the transport of neuroactive tryptophan metabolites kynurenate (KYNA) and xanthurenate (XA) and may contribute to their secretion from the brain. May transport glutamate. Also involved in the disposition of uremic toxins and potentially toxic xenobiotics by the renal organic anion secretory pathway, helping reduce their undesired toxicological effects on the body. Uremic toxins include the indoxyl sulfate (IS), hippurate/N-benzoylglycine (HA), indole acetate (IA), 3-carboxy-4- methyl-5-propyl-2-furanpropionate (CMPF) and urate. Xenobiotics include the mycotoxin ochratoxin (OTA). May also contribute to the transport of organic compounds in testes across the blood-testis-barrier. May also work as a bidirectional OA/dicarboxylate exchanger. The polypeptide is Solute carrier family 22 member 6 (Oryctolagus cuniculus (Rabbit)).